The sequence spans 293 residues: Formamidopyrimidine-DNA glycosylase (293 aa).

The active-site Schiff-base intermediate with DNA is P2. E3 acts as the Proton donor in catalysis. Catalysis depends on K58, which acts as the Proton donor; for beta-elimination activity. Positions 104, 123, and 166 each coordinate DNA. The FPG-type zinc finger occupies Q257–R293. Catalysis depends on R283, which acts as the Proton donor; for delta-elimination activity.

Belongs to the FPG family. As to quaternary structure, monomer. Zn(2+) serves as cofactor.

It catalyses the reaction Hydrolysis of DNA containing ring-opened 7-methylguanine residues, releasing 2,6-diamino-4-hydroxy-5-(N-methyl)formamidopyrimidine.. The enzyme catalyses 2'-deoxyribonucleotide-(2'-deoxyribose 5'-phosphate)-2'-deoxyribonucleotide-DNA = a 3'-end 2'-deoxyribonucleotide-(2,3-dehydro-2,3-deoxyribose 5'-phosphate)-DNA + a 5'-end 5'-phospho-2'-deoxyribonucleoside-DNA + H(+). Functionally, involved in base excision repair of DNA damaged by oxidation or by mutagenic agents. Acts as a DNA glycosylase that recognizes and removes damaged bases. Has a preference for oxidized purines, such as 7,8-dihydro-8-oxoguanine (8-oxoG). Has AP (apurinic/apyrimidinic) lyase activity and introduces nicks in the DNA strand. Cleaves the DNA backbone by beta-delta elimination to generate a single-strand break at the site of the removed base with both 3'- and 5'-phosphates. This is Formamidopyrimidine-DNA glycosylase from Bradyrhizobium sp. (strain BTAi1 / ATCC BAA-1182).